The primary structure comprises 294 residues: S-adenosylmethionine uptake transporter (294 aa).

Transmembrane regions (helical) follow at residues 4–24, 39–59, 74–91, 98–118, 121–141, 148–168, 177–197, 207–227, 237–257, and 260–280; these read ALKTYLTGIGWFLLSLVSSSA, FEVAFFRFFFSSIVLLPFVFY, ILRGLLLFFGMTSWTYGL, TATVVSFSIPLFTLILAVFFL, NIIWQRWVVTVVGFIGLVVTL, FNPEILYFVLAAISFAMLDII, SMISMLFYSAIVTAVVSLPVA, FELALLFVLGSSGSLILFFLL, ATAPYRYLELVISAIAAYFIF, and FPDKSTLHGAVIIIPATLFII. EamA domains follow at residues 21 to 141 and 160 to 280; these read SSSA…VVTL and ISFA…LFII.

It belongs to the drug/metabolite transporter (DMT) superfamily. 10 TMS drug/metabolite exporter (DME) (TC 2.A.7.3) family.

It localises to the cell inner membrane. Functionally, transports S-adenosylmethionine. This is S-adenosylmethionine uptake transporter (sam) from Rickettsia felis (strain ATCC VR-1525 / URRWXCal2) (Rickettsia azadi).